The sequence spans 620 residues: Chaperone protein HtpG (620 aa).

Positions 1 to 339 (MAKHQFQTEI…SEDLPLNVSR (339 aa)) are a; substrate-binding. The interval 340–546 (ELLQENRILA…ASDPMAGMAA (207 aa)) is b. A c region spans residues 547-620 (MFAQMGQEMP…RVASLATKAL (74 aa)).

It belongs to the heat shock protein 90 family. Homodimer.

It is found in the cytoplasm. Molecular chaperone. Has ATPase activity. This Sulfurovum sp. (strain NBC37-1) protein is Chaperone protein HtpG.